We begin with the raw amino-acid sequence, 576 residues long: Sulfite reductase [NADPH] hemoprotein beta-component (576 aa).

C435, C441, C480, and C484 together coordinate [4Fe-4S] cluster. C484 contacts siroheme.

It belongs to the nitrite and sulfite reductase 4Fe-4S domain family. As to quaternary structure, alpha(8)-beta(8). The alpha component is a flavoprotein, the beta component is a hemoprotein. It depends on siroheme as a cofactor. [4Fe-4S] cluster is required as a cofactor.

The enzyme catalyses hydrogen sulfide + 3 NADP(+) + 3 H2O = sulfite + 3 NADPH + 4 H(+). The protein operates within sulfur metabolism; hydrogen sulfide biosynthesis; hydrogen sulfide from sulfite (NADPH route): step 1/1. In terms of biological role, component of the sulfite reductase complex that catalyzes the 6-electron reduction of sulfite to sulfide. This is one of several activities required for the biosynthesis of L-cysteine from sulfate. This Yersinia pestis bv. Antiqua (strain Antiqua) protein is Sulfite reductase [NADPH] hemoprotein beta-component.